Consider the following 192-residue polypeptide: Protein GrpE (192 aa).

This sequence belongs to the GrpE family. In terms of assembly, homodimer.

Its subcellular location is the cytoplasm. In terms of biological role, participates actively in the response to hyperosmotic and heat shock by preventing the aggregation of stress-denatured proteins, in association with DnaK and GrpE. It is the nucleotide exchange factor for DnaK and may function as a thermosensor. Unfolded proteins bind initially to DnaJ; upon interaction with the DnaJ-bound protein, DnaK hydrolyzes its bound ATP, resulting in the formation of a stable complex. GrpE releases ADP from DnaK; ATP binding to DnaK triggers the release of the substrate protein, thus completing the reaction cycle. Several rounds of ATP-dependent interactions between DnaJ, DnaK and GrpE are required for fully efficient folding. In Neisseria gonorrhoeae (strain NCCP11945), this protein is Protein GrpE.